The following is a 138-amino-acid chain: ATP synthase epsilon chain (138 aa).

This sequence belongs to the ATPase epsilon chain family. As to quaternary structure, F-type ATPases have 2 components, CF(1) - the catalytic core - and CF(0) - the membrane proton channel. CF(1) has five subunits: alpha(3), beta(3), gamma(1), delta(1), epsilon(1). CF(0) has three main subunits: a, b and c.

It is found in the cell membrane. Its function is as follows. Produces ATP from ADP in the presence of a proton gradient across the membrane. This chain is ATP synthase epsilon chain (atpC), found in Streptococcus mutans serotype c (strain ATCC 700610 / UA159).